We begin with the raw amino-acid sequence, 310 residues long: tRNA pseudouridine synthase B (310 aa).

Aspartate 47 serves as the catalytic Nucleophile.

This sequence belongs to the pseudouridine synthase TruB family. Type 1 subfamily.

The catalysed reaction is uridine(55) in tRNA = pseudouridine(55) in tRNA. Functionally, responsible for synthesis of pseudouridine from uracil-55 in the psi GC loop of transfer RNAs. The polypeptide is tRNA pseudouridine synthase B (Psychromonas ingrahamii (strain DSM 17664 / CCUG 51855 / 37)).